The chain runs to 430 residues: Adenylosuccinate synthetase (430 aa).

GTP is bound by residues 13–19 (GDEGKGK) and 41–43 (GHT). Aspartate 14 acts as the Proton acceptor in catalysis. Mg(2+)-binding residues include aspartate 14 and glycine 41. Residues 14 to 17 (DEGK), 39 to 42 (NAGH), threonine 130, arginine 144, glutamine 225, threonine 240, and arginine 304 contribute to the IMP site. Catalysis depends on histidine 42, which acts as the Proton donor. Residue 300 to 306 (ASTGRPR) coordinates substrate. GTP-binding positions include arginine 306, 332 to 334 (KLD), and 414 to 416 (STG).

This sequence belongs to the adenylosuccinate synthetase family. As to quaternary structure, homodimer. Requires Mg(2+) as cofactor.

It is found in the cytoplasm. The catalysed reaction is IMP + L-aspartate + GTP = N(6)-(1,2-dicarboxyethyl)-AMP + GDP + phosphate + 2 H(+). It participates in purine metabolism; AMP biosynthesis via de novo pathway; AMP from IMP: step 1/2. Plays an important role in the de novo pathway of purine nucleotide biosynthesis. Catalyzes the first committed step in the biosynthesis of AMP from IMP. This chain is Adenylosuccinate synthetase, found in Xanthomonas oryzae pv. oryzae (strain MAFF 311018).